A 242-amino-acid chain; its full sequence is Pyridoxine 5'-phosphate synthase (242 aa).

N6 is a binding site for 3-amino-2-oxopropyl phosphate. 8–9 (DH) serves as a coordination point for 1-deoxy-D-xylulose 5-phosphate. R17 is a binding site for 3-amino-2-oxopropyl phosphate. H42 functions as the Proton acceptor in the catalytic mechanism. 1-deoxy-D-xylulose 5-phosphate-binding residues include R44 and H49. E69 (proton acceptor) is an active-site residue. T99 lines the 1-deoxy-D-xylulose 5-phosphate pocket. H190 serves as the catalytic Proton donor. 3-amino-2-oxopropyl phosphate contacts are provided by residues G191 and 212–213 (GH).

It belongs to the PNP synthase family. In terms of assembly, homooctamer; tetramer of dimers.

Its subcellular location is the cytoplasm. The catalysed reaction is 3-amino-2-oxopropyl phosphate + 1-deoxy-D-xylulose 5-phosphate = pyridoxine 5'-phosphate + phosphate + 2 H2O + H(+). It participates in cofactor biosynthesis; pyridoxine 5'-phosphate biosynthesis; pyridoxine 5'-phosphate from D-erythrose 4-phosphate: step 5/5. Functionally, catalyzes the complicated ring closure reaction between the two acyclic compounds 1-deoxy-D-xylulose-5-phosphate (DXP) and 3-amino-2-oxopropyl phosphate (1-amino-acetone-3-phosphate or AAP) to form pyridoxine 5'-phosphate (PNP) and inorganic phosphate. In Neisseria meningitidis serogroup A / serotype 4A (strain DSM 15465 / Z2491), this protein is Pyridoxine 5'-phosphate synthase.